The following is a 368-amino-acid chain: Ferredoxin--NADP reductase 2 (368 aa).

FAD contacts are provided by D57, Q65, Y70, V110, F145, D310, and T351.

Belongs to the ferredoxin--NADP reductase type 2 family. As to quaternary structure, homodimer. FAD is required as a cofactor.

It catalyses the reaction 2 reduced [2Fe-2S]-[ferredoxin] + NADP(+) + H(+) = 2 oxidized [2Fe-2S]-[ferredoxin] + NADPH. The sequence is that of Ferredoxin--NADP reductase 2 from Cupriavidus pinatubonensis (strain JMP 134 / LMG 1197) (Cupriavidus necator (strain JMP 134)).